A 332-amino-acid chain; its full sequence is UBA domain-containing protein Mud1 (332 aa).

Residue D127 is part of the active site. The interval 246–298 (GLGIEPASKASASSPNPQSGTRLGTKESVAPNNEGSSNPPSLVNPPTDPGLNS) is disordered. The span at 251-264 (PASKASASSPNPQS) shows a compositional bias: low complexity. Residues 275-286 (APNNEGSSNPPS) are compositionally biased toward polar residues. A UBA domain is found at 291–332 (PTDPGLNSKIAQLVSMGFDPLEAAQALDAANGDLDVAASFLL).

Belongs to the DDI1 family. Homodimer. Interacts (via UBA domain) with polyubiquitin (polyUb) chains (via Lys-48-linked polyUbs). Has weak binding affinity for monoubiquitin. According to another report, has no affinity for monoubiquitin.

The protein localises to the cytoplasm. It localises to the cell membrane. Recognizes and binds polyubiquitin chains. Acts as a linker between the 19S proteasome and polyubiquitinated proteins via UBA domain interactions with ubiquitin for their subsequent degradation. Aspartic protease. Appears to act as negative regulator of constitutive exocytosis. May act at the level of secretory vesicle docking and fusion as a competitive inhibitor of SNARE assembly. Required for S-phase checkpoint control. In Schizosaccharomyces pombe (strain 972 / ATCC 24843) (Fission yeast), this protein is UBA domain-containing protein Mud1.